The primary structure comprises 322 residues: Germ cell-specific gene 1-like protein (322 aa).

Residues 1–8 lie on the Cytoplasmic side of the membrane; the sequence is MKTSRRGR. A helical membrane pass occupies residues 9–29; that stretch reads ALLAVALNLLALLFATTAFLT. Topologically, residues 30-122 are extracellular; it reads TYWCQGTQRV…FIDLAPASEK (93 aa). Residues 123 to 143 traverse the membrane as a helical segment; sequence GVLWLSVVSEVLYILLLVVGF. At 144 to 163 the chain is on the cytoplasmic side; it reads SLMCLELVHSSSVIDGLKLN. The helical transmembrane segment at 164-184 threads the bilayer; it reads AFAAVFTVLSGLLGMVAHMMY. The Extracellular segment spans residues 185-207; that stretch reads TQVFQVTVSLGPEDWRPHSWDYG. Residues 208–228 form a helical membrane-spanning segment; the sequence is WSFCLAWGSFTCCMAASVTTL. The Cytoplasmic portion of the chain corresponds to 229 to 322; the sequence is NSYTKTVIEF…RQCWVLGHWV (94 aa). Phosphoserine is present on S274.

This sequence belongs to the GSG1 family. Component of the inner core of AMPAR complexes. AMPAR complexes consist of an inner core made of 4 pore-forming GluA/GRIA proteins (GRIA1, GRIA2, GRIA3 and GRIA4) and 4 major auxiliary subunits arranged in a twofold symmetry. One of the two pairs of distinct binding sites is occupied either by CNIH2, CNIH3 or CACNG2, CACNG3. The other harbors CACNG2, CACNG3, CACNG4, CACNG8 or GSG1L. This inner core of AMPAR complexes is complemented by outer core constituents binding directly to the GluA/GRIA proteins at sites distinct from the interaction sites of the inner core constituents. Outer core constituents include at least PRRT1, PRRT2, CKAMP44/SHISA9, FRRS1L and NRN1. The proteins of the inner and outer core serve as a platform for other, more peripherally associated AMPAR constituents. Alone or in combination, these auxiliary subunits control the gating and pharmacology of the AMPAR complexes and profoundly impact their biogenesis and protein processing. Expressed in the brain, including hippocampus (at protein level).

It is found in the cell membrane. The protein resides in the synapse. As a component of the inner core of AMPAR complexes, modifies AMPA receptor (AMPAR) gating. The chain is Germ cell-specific gene 1-like protein (Gsg1l) from Mus musculus (Mouse).